The following is a 527-amino-acid chain: MTADLLPVRRALLSVSDKTGLVELATALAARGVELLSTGGTAKAIRDAGLAVKDVADVTGFPEMMDGRVKTLHPMVHGGLLGRSGLDDAVMAEHGIGAIDLLVLNLYPFESVTAKADCTLADAVENIDIGGPAMLRSAAKNFARVAVATDPSQYAELLASLDANDGQLSASTRFAFSVAAFNRVAQYDAAISNYLSAVTATDAAVPARAEYPAQMNSTFVKVMDLRYGENPHQSGAFYRDLYPVPGTLATFQQLQGKELSYNNLADADAAWECVRQFDAPACVIVKHANPCGVAVGAGNGDAYELAYATDPTSAFGGIIAFNKPLDAATAKVILDRQFVEVLIAPDYEPAALEYAQKKANVRVLRIPHGDGLNNFDSKRVGSGLLLQSSDNRGMTRDELKVVSKLAPTDKQFTDLLFAWKVAKFVKSNAIVYAKDNRTIGVGAGQMSRVYSARIAGIKAADANLVVEGSVMASDAFFPFRDGIDAAAAAGIKAVIQPGGSMRDAEVIAAADEHGLAMVFTGVRHFRH.

Positions 1–149 (MTADLLPVRR…KNFARVAVAT (149 aa)) constitute an MGS-like domain.

This sequence belongs to the PurH family.

The catalysed reaction is (6R)-10-formyltetrahydrofolate + 5-amino-1-(5-phospho-beta-D-ribosyl)imidazole-4-carboxamide = 5-formamido-1-(5-phospho-D-ribosyl)imidazole-4-carboxamide + (6S)-5,6,7,8-tetrahydrofolate. It catalyses the reaction IMP + H2O = 5-formamido-1-(5-phospho-D-ribosyl)imidazole-4-carboxamide. It functions in the pathway purine metabolism; IMP biosynthesis via de novo pathway; 5-formamido-1-(5-phospho-D-ribosyl)imidazole-4-carboxamide from 5-amino-1-(5-phospho-D-ribosyl)imidazole-4-carboxamide (10-formyl THF route): step 1/1. Its pathway is purine metabolism; IMP biosynthesis via de novo pathway; IMP from 5-formamido-1-(5-phospho-D-ribosyl)imidazole-4-carboxamide: step 1/1. The chain is Bifunctional purine biosynthesis protein PurH from Stenotrophomonas maltophilia (strain K279a).